The chain runs to 359 residues: DNA polymerase IV (359 aa).

The UmuC domain occupies 7–188; it reads IIHIDMDAFY…LPIGKFFGVG (182 aa). Mg(2+) is bound by residues Asp11 and Asp106. The active site involves Glu107.

The protein belongs to the DNA polymerase type-Y family. As to quaternary structure, monomer. Mg(2+) serves as cofactor.

Its subcellular location is the cytoplasm. It carries out the reaction DNA(n) + a 2'-deoxyribonucleoside 5'-triphosphate = DNA(n+1) + diphosphate. In terms of biological role, poorly processive, error-prone DNA polymerase involved in untargeted mutagenesis. Copies undamaged DNA at stalled replication forks, which arise in vivo from mismatched or misaligned primer ends. These misaligned primers can be extended by PolIV. Exhibits no 3'-5' exonuclease (proofreading) activity. May be involved in translesional synthesis, in conjunction with the beta clamp from PolIII. The polypeptide is DNA polymerase IV (Clostridium perfringens (strain SM101 / Type A)).